Reading from the N-terminus, the 425-residue chain is Zinc finger protein 789 (425 aa).

The region spanning Leu11–Ala82 is the KRAB domain. C2H2-type zinc fingers lie at residues Tyr201–His223, Phe229–His251, Tyr257–His279, Tyr285–His307, His313–His335, His341–His363, Phe369–His391, and Tyr397–His419.

The protein belongs to the krueppel C2H2-type zinc-finger protein family.

The protein resides in the nucleus. May be involved in transcriptional regulation. The chain is Zinc finger protein 789 (ZNF789) from Homo sapiens (Human).